We begin with the raw amino-acid sequence, 434 residues long: Serine--tRNA ligase (434 aa).

Position 239–241 (Thr-239–Glu-241) interacts with L-serine. Arg-270 to Glu-272 is an ATP binding site. An L-serine-binding site is contributed by Glu-293. ATP is bound at residue Glu-357–Ser-360. Ser-393 provides a ligand contact to L-serine.

It belongs to the class-II aminoacyl-tRNA synthetase family. Type-1 seryl-tRNA synthetase subfamily. In terms of assembly, homodimer. The tRNA molecule binds across the dimer.

It localises to the cytoplasm. The catalysed reaction is tRNA(Ser) + L-serine + ATP = L-seryl-tRNA(Ser) + AMP + diphosphate + H(+). It carries out the reaction tRNA(Sec) + L-serine + ATP = L-seryl-tRNA(Sec) + AMP + diphosphate + H(+). Its pathway is aminoacyl-tRNA biosynthesis; selenocysteinyl-tRNA(Sec) biosynthesis; L-seryl-tRNA(Sec) from L-serine and tRNA(Sec): step 1/1. Functionally, catalyzes the attachment of serine to tRNA(Ser). Is also able to aminoacylate tRNA(Sec) with serine, to form the misacylated tRNA L-seryl-tRNA(Sec), which will be further converted into selenocysteinyl-tRNA(Sec). The protein is Serine--tRNA ligase of Mesorhizobium japonicum (strain LMG 29417 / CECT 9101 / MAFF 303099) (Mesorhizobium loti (strain MAFF 303099)).